Consider the following 274-residue polypeptide: Rhamnulose-1-phosphate aldolase (274 aa).

Residue glutamate 117 is part of the active site. 3 residues coordinate Zn(2+): histidine 141, histidine 143, and histidine 212.

It belongs to the aldolase class II family. RhaD subfamily. Homotetramer. The cofactor is Zn(2+).

It localises to the cytoplasm. It catalyses the reaction L-rhamnulose 1-phosphate = (S)-lactaldehyde + dihydroxyacetone phosphate. Its pathway is carbohydrate degradation; L-rhamnose degradation; glycerone phosphate from L-rhamnose: step 3/3. Catalyzes the reversible cleavage of L-rhamnulose-1-phosphate to dihydroxyacetone phosphate (DHAP) and L-lactaldehyde. This Escherichia coli O17:K52:H18 (strain UMN026 / ExPEC) protein is Rhamnulose-1-phosphate aldolase.